A 297-amino-acid polypeptide reads, in one-letter code: MKLSVIIPTYNCASFIEKAINSIVKNRPNDLEIEVLIIDDGSIDNTNKVIKKIQDQINNLTLQYFYKSNGNWGSVINYVRNNKLAKGEWVTVLDSDDIFSKKTISIFQKYAQKQRYDAIIFDYYKCWKKFLWKIPTYARFRKEIKGELKKQTPFCIPLAKFFKNEVFYQLPKLRENVGFQDAIYTMHALQIANNVFHVSKAGGYYFFKRVGNSMSIPWHSSRFDIEVQICKDLIENNAQEIALVHLLRLKFRNLVDDKKIKFTVKRDFCFSGFSWYSRLILSLMYNFWLKRYFNSSE.

Belongs to the glycosyltransferase 2 family.

This is an uncharacterized protein from Mycoplasma genitalium (strain ATCC 33530 / DSM 19775 / NCTC 10195 / G37) (Mycoplasmoides genitalium).